A 180-amino-acid chain; its full sequence is uncharacterized protein (180 aa).

Residues 1–31 (MSTYEEEHGIQQNSRDYQEVGGTSQEEQRRQ) form a disordered region. Position 2 is an N-acetylserine (serine 2). The RING-type zinc finger occupies 109-153 (CSICYTNYLEDEYPLVVELPHCHHKFDLECLSVWLSRSTTCPLCR).

This is an uncharacterized protein from Saccharomyces cerevisiae (strain ATCC 204508 / S288c) (Baker's yeast).